Consider the following 342-residue polypeptide: Glucokinase (342 aa).

18-23 (GDIGGT) serves as a coordination point for ATP.

This sequence belongs to the bacterial glucokinase family.

The protein resides in the cytoplasm. It carries out the reaction D-glucose + ATP = D-glucose 6-phosphate + ADP + H(+). The protein is Glucokinase of Chelativorans sp. (strain BNC1).